Consider the following 538-residue polypeptide: Growth factor receptor-bound protein 14 (538 aa).

Positions 1–73 (MTTSLQDGQS…KAKDLEVQET (73 aa)) are disordered. Residue threonine 2 is modified to N-acetylthreonine. Positions 54–69 (ATRRGAMDRRKAKDLE) are enriched in basic and acidic residues. In terms of domain architecture, Ras-associating spans 104 to 190 (KKQVIKVYSE…NKLYLRKNYA (87 aa)). One can recognise a PH domain in the interval 232 to 340 (YPEIHGFLHA…WVTAIRLLKY (109 aa)). Phosphoserine is present on residues serine 370 and serine 373. One can recognise an SH2 domain in the interval 437–533 (WFHHRISRDE…VLPCKLKHYC (97 aa)).

It belongs to the GRB7/10/14 family. In terms of assembly, interacts with the cytoplasmic domain of the autophosphorylated insulin receptor, through the SH2 domain. Interacts with GRB14 (via BPS domain); this interaction protects the tyrosines in the activation loop on INSR from dephosphorylation. Binds to the ankyrin repeat region of TNKS2 via its N-terminus. Interacts with activated NRAS. Interacts (via SH2 domain) with TEK/TIE2 (tyrosine phosphorylated). Phosphorylated on serine residues. Phosphorylated on tyrosine residues by TEK/TIE2.

It localises to the cytoplasm. The protein resides in the endosome membrane. In terms of biological role, adapter protein which modulates coupling of cell surface receptor kinases with specific signaling pathways. Binds to, and suppresses signals from, the activated insulin receptor (INSR). Potent inhibitor of insulin-stimulated MAPK3 phosphorylation. Plays a critical role regulating PDPK1 membrane translocation in response to insulin stimulation and serves as an adapter protein to recruit PDPK1 to activated insulin receptor, thus promoting PKB/AKT1 phosphorylation and transduction of the insulin signal. The chain is Growth factor receptor-bound protein 14 (Grb14) from Rattus norvegicus (Rat).